Here is a 934-residue protein sequence, read N- to C-terminus: Serine/threonine-protein kinase KIPK1 (934 aa).

6 disordered regions span residues 20–40, 70–113, 189–227, 305–343, 395–438, and 466–493; these read LPKHSGRYGKSVMGSSSKDLV, RLMS…RFVG, PLMPVNDKPSSSKSVPQRFEDPSNPISEPSQAGTSFGLQ, SSSAVDSEQKGKLDDAPNSGTENGKTVRKVTRMIPRPKQ, SIDD…SCNV, and EKETENPTSSEKFEFSLSSKDSLGDYSR. Polar residues-rich tracts occupy residues 82–94 and 212–227; these read SASAGPSRTTSPS and NPISEPSQAGTSFGLQ. Polar residues predominate over residues 395 to 421; the sequence is SIDDNPPSYTSSHNPKICTDSLSSVSN. One can recognise a Protein kinase domain in the interval 538–879; sequence FNLLKKLGCG…SVEIKRHPFF (342 aa). ATP is bound by residues 544–552 and K567; that span reads LGCGDIGTV. D663 acts as the Proton acceptor in catalysis. Positions 738–773 are disordered; it reads SSNQQQGRKPKRGDHLSKTQQHLSRSLPQLVAEPTE. Positions 755–764 are enriched in polar residues; sequence KTQQHLSRSL.

The protein belongs to the protein kinase superfamily. Ser/Thr protein kinase family. Interacts with KCBP. Interacts with PERK8, PERK9, PERK10 and PERK13. Autophosphorylated. In terms of tissue distribution, expressed in roots, cauline leaves, flowers and siliques.

The protein localises to the cytoplasm. It is found in the nucleus. The enzyme catalyses L-seryl-[protein] + ATP = O-phospho-L-seryl-[protein] + ADP + H(+). The catalysed reaction is L-threonyl-[protein] + ATP = O-phospho-L-threonyl-[protein] + ADP + H(+). Could be involved in the negative regulation of root growth. The protein is Serine/threonine-protein kinase KIPK1 of Arabidopsis thaliana (Mouse-ear cress).